The chain runs to 355 residues: Probable zinc transporter 12 (355 aa).

An N-terminal signal peptide occupies residues methionine 1–alanine 25. At alanine 26–lysine 50 the chain is on the extracellular side. Residues isoleucine 51 to glycine 71 traverse the membrane as a helical segment. Topologically, residues leucine 72 to asparagine 77 are cytoplasmic. Residues phenylalanine 78–isoleucine 98 form a helical membrane-spanning segment. The Extracellular segment spans residues leucine 99–proline 116. A helical membrane pass occupies residues tryptophan 117–isoleucine 137. At glutamate 138–lysine 200 the chain is on the cytoplasmic side. The tract at residues threonine 156 to histidine 183 is disordered. A helical membrane pass occupies residues isoleucine 201–leucine 221. The Extracellular segment spans residues glycine 222–lysine 231. The helical transmembrane segment at proline 232–isoleucine 252 threads the bilayer. Topologically, residues serine 253–lysine 261 are cytoplasmic. A helical membrane pass occupies residues isoleucine 262–glycine 282. The Extracellular portion of the chain corresponds to valine 283–asparagine 302. A helical membrane pass occupies residues alanine 303–methionine 323. Residues asparagine 324 to glutamine 334 lie on the Cytoplasmic side of the membrane. The chain crosses the membrane as a helical span at residues valine 335–alanine 355.

It belongs to the ZIP transporter (TC 2.A.5) family.

It is found in the cell membrane. Its function is as follows. Zinc transporter involved in zinc uptake in roots. Targeted by BZIP23 transcription factor in response to zinc-deficient conditions. The polypeptide is Probable zinc transporter 12 (ZIP12) (Arabidopsis thaliana (Mouse-ear cress)).